The following is a 485-amino-acid chain: Ribosomal protein uS12 methylthiotransferase RimO (485 aa).

Residues 37–147 form the MTTase N-terminal domain; the sequence is SRIGFVSLGC…VVEQVHEHLP (111 aa). [4Fe-4S] cluster is bound by residues C46, C82, C111, C179, C183, and C186. A Radical SAM core domain is found at 165 to 402; it reads LTPRHYAYLK…MEVQGEISAA (238 aa). The 67-residue stretch at 405–471 folds into the TRAM domain; that stretch reads KARIGNEYQV…EHDVWAVLSE (67 aa).

Belongs to the methylthiotransferase family. RimO subfamily. [4Fe-4S] cluster serves as cofactor.

The protein resides in the cytoplasm. It catalyses the reaction L-aspartate(89)-[ribosomal protein uS12]-hydrogen + (sulfur carrier)-SH + AH2 + 2 S-adenosyl-L-methionine = 3-methylsulfanyl-L-aspartate(89)-[ribosomal protein uS12]-hydrogen + (sulfur carrier)-H + 5'-deoxyadenosine + L-methionine + A + S-adenosyl-L-homocysteine + 2 H(+). Catalyzes the methylthiolation of an aspartic acid residue of ribosomal protein uS12. This is Ribosomal protein uS12 methylthiotransferase RimO from Alteromonas mediterranea (strain DSM 17117 / CIP 110805 / LMG 28347 / Deep ecotype).